Reading from the N-terminus, the 1042-residue chain is Probable serine/threonine protein kinase IRE4 (1042 aa).

Composition is skewed to basic and acidic residues over residues 1-10, 102-115, and 314-327; these read MAEENRKDRG, EEIK…GKDE, and QRNE…RRDK. Disordered regions lie at residues 1 to 75, 90 to 115, and 297 to 327; these read MAEE…GTKL, PPKY…GKDE, and WGST…RRDK. A C2H2-type; atypical zinc finger spans residues 402–421; that stretch reads CRICEEEVPLFHLEPHSYIC. The region spanning 670–955 is the Protein kinase domain; it reads FEIIKPISRG…AAEVKSHPFF (286 aa). ATP contacts are provided by residues 676–684 and Lys699; that span reads ISRGAFGKV. Asp793 serves as the catalytic Proton acceptor. The disordered stretch occupies residues 830–850; that stretch reads ESDVSPRTNSHHFQKNQEEER. Phosphoserine is present on Ser854. An AGC-kinase C-terminal domain is found at 956-1042; that stretch reads QGVDWENLAL…KLFFLLLCVF (87 aa).

The protein belongs to the protein kinase superfamily. AGC Ser/Thr protein kinase family.

The enzyme catalyses L-seryl-[protein] + ATP = O-phospho-L-seryl-[protein] + ADP + H(+). The catalysed reaction is L-threonyl-[protein] + ATP = O-phospho-L-threonyl-[protein] + ADP + H(+). This Arabidopsis thaliana (Mouse-ear cress) protein is Probable serine/threonine protein kinase IRE4.